The chain runs to 216 residues: GTP cyclohydrolase 1 (216 aa).

Cys-109, His-112, and Cys-180 together coordinate Zn(2+).

This sequence belongs to the GTP cyclohydrolase I family. Toroid-shaped homodecamer, composed of two pentamers of five dimers.

It carries out the reaction GTP + H2O = 7,8-dihydroneopterin 3'-triphosphate + formate + H(+). It participates in cofactor biosynthesis; 7,8-dihydroneopterin triphosphate biosynthesis; 7,8-dihydroneopterin triphosphate from GTP: step 1/1. In Wigglesworthia glossinidia brevipalpis, this protein is GTP cyclohydrolase 1.